Reading from the N-terminus, the 456-residue chain is 3-isopropylmalate dehydratase large subunit (456 aa).

Residues Cys336, Cys396, and Cys399 each coordinate [4Fe-4S] cluster.

It belongs to the aconitase/IPM isomerase family. LeuC type 1 subfamily. As to quaternary structure, heterodimer of LeuC and LeuD. It depends on [4Fe-4S] cluster as a cofactor.

It catalyses the reaction (2R,3S)-3-isopropylmalate = (2S)-2-isopropylmalate. Its pathway is amino-acid biosynthesis; L-leucine biosynthesis; L-leucine from 3-methyl-2-oxobutanoate: step 2/4. Its function is as follows. Catalyzes the isomerization between 2-isopropylmalate and 3-isopropylmalate, via the formation of 2-isopropylmaleate. The sequence is that of 3-isopropylmalate dehydratase large subunit from Staphylococcus aureus (strain MW2).